The following is a 72-amino-acid chain: Phaiodotoxin-2 (72 aa).

The 72-residue stretch at Lys-1–Ala-72 folds into the LCN-type CS-alpha/beta domain. 4 disulfides stabilise this stretch: Cys-13–Cys-38, Cys-23–Cys-50, Cys-27–Cys-52, and Cys-63–Cys-71.

Belongs to the long (4 C-C) scorpion toxin superfamily. Sodium channel inhibitor family. In terms of tissue distribution, expressed by the venom gland.

The protein resides in the secreted. Sodium channel (Nav) specific neurotoxin. This is Phaiodotoxin-2 from Anuroctonus phaiodactylus (Mafia scorpion).